The following is a 31-amino-acid chain: Cycloviolacin-O25 (31 aa).

Positions 1-31 form a cross-link, cyclopeptide (Asp-Asn); the sequence is DIFCGETCAFIPCITHVPGTCSCKSKVCYFN. Intrachain disulfides connect C4-C21, C8-C23, and C13-C28.

Post-translationally, this is a cyclic peptide. As to expression, expressed in roots and runners but not in leaves, petals and petioles (at protein level).

Probably participates in a plant defense mechanism. This chain is Cycloviolacin-O25, found in Viola odorata (Sweet violet).